The primary structure comprises 356 residues: Peptide chain release factor 1 (356 aa).

An N5-methylglutamine modification is found at Q233.

The protein belongs to the prokaryotic/mitochondrial release factor family. Methylated by PrmC. Methylation increases the termination efficiency of RF1.

It localises to the cytoplasm. In terms of biological role, peptide chain release factor 1 directs the termination of translation in response to the peptide chain termination codons UAG and UAA. This is Peptide chain release factor 1 from Oceanobacillus iheyensis (strain DSM 14371 / CIP 107618 / JCM 11309 / KCTC 3954 / HTE831).